Here is a 2175-residue protein sequence, read N- to C-terminus: Homeobox protein cut (2175 aa).

2 disordered regions span residues asparagine 139–glycine 170 and glycine 249–alanine 432. Composition is skewed to low complexity over residues leucine 153 to serine 169 and glycine 249 to serine 268. Residues serine 265–leucine 343 are a coiled coil. The segment covering aspartate 271–asparagine 294 has biased composition (acidic residues). The span at glutamine 309–threonine 320 shows a compositional bias: polar residues. Residues asparagine 344–serine 359 show a composition bias toward low complexity. Residues arginine 360–alanine 374 are compositionally biased toward polar residues. A compositionally biased stretch (low complexity) spans asparagine 384 to asparagine 415. A coiled-coil region spans residues valine 433–leucine 499. The span at alanine 503–aspartate 515 shows a compositional bias: low complexity. Disordered regions lie at residues alanine 503 to lysine 600 and alanine 656 to alanine 765. Residues alanine 546–proline 568 are compositionally biased toward acidic residues. The segment covering glutamine 673–leucine 696 has biased composition (basic residues). The span at glutamine 697–serine 710 shows a compositional bias: low complexity. Positions histidine 714–histidine 735 are enriched in basic residues. The span at threonine 738 to alanine 765 shows a compositional bias: low complexity. Residues asparagine 877–lysine 964 constitute a DNA-binding region (CUT 1). Disordered stretches follow at residues leucine 1001 to glutamine 1083 and glutamine 1197 to alanine 1289. Basic and acidic residues-rich tracts occupy residues glutamine 1009–lysine 1030 and glutamine 1062–glutamine 1083. Residues glutamate 1056–glutamine 1161 are a coiled coil. A compositionally biased stretch (low complexity) spans glycine 1249–serine 1282. The segment at residues glutamine 1330–lysine 1417 is a DNA-binding region (CUT 2). Residues alanine 1463 to histidine 1522 are a coiled coil. Low complexity predominate over residues alanine 1507 to glutamine 1540. Disordered stretches follow at residues alanine 1507–methionine 1588, glutamate 1695–lysine 1747, glutamine 1803–phenylalanine 1826, arginine 1922–threonine 1955, lysine 2069–lysine 2097, and serine 2113–tyrosine 2175. Residues alanine 1564–glutamine 1573 are compositionally biased toward gly residues. The segment at residues tyrosine 1608 to glutamate 1695 is a DNA-binding region (CUT 3). The segment covering asparagine 1709–proline 1732 has biased composition (low complexity). A DNA-binding region (homeobox) is located at residues serine 1745–valine 1804. Phosphoserine occurs at positions 1940 and 1944. The segment covering proline 2126 to alanine 2135 has biased composition (pro residues). Residues alanine 2136–tyrosine 2175 show a composition bias toward low complexity.

Belongs to the CUT homeobox family. Detected in many cells in the central nervous system, all external sensory organs, some peripheral neurons, and in the non-neural cells of the spiracles and the Malpighian tubules.

It is found in the nucleus. Its function is as follows. Regulator of cell fate decisions in multiple lineages. Specifically, functions as a determination factor that specifies sensory organ identity in precursor cells. Probably also involved in cell type specification of Malpighian tubules. In absence of cut gene external sensory organs are transformed into chordotonal organs. In Drosophila melanogaster (Fruit fly), this protein is Homeobox protein cut (ct).